We begin with the raw amino-acid sequence, 146 residues long: Large ribosomal subunit protein uL14 (146 aa).

It belongs to the universal ribosomal protein uL14 family.

The protein is Large ribosomal subunit protein uL14 (RPL23) of Encephalitozoon cuniculi (strain GB-M1) (Microsporidian parasite).